The primary structure comprises 309 residues: Pantoate--beta-alanine ligase (309 aa).

It belongs to the pantothenate synthetase family.

The protein resides in the cytoplasm. It is found in the nucleus. It carries out the reaction (R)-pantoate + beta-alanine + ATP = (R)-pantothenate + AMP + diphosphate + H(+). It participates in cofactor biosynthesis; (R)-pantothenate biosynthesis; (R)-pantothenate from (R)-pantoate and beta-alanine: step 1/1. Its function is as follows. Required for pantothenic acid biosynthesis. This chain is Pantoate--beta-alanine ligase (PAN6), found in Saccharomyces cerevisiae (strain ATCC 204508 / S288c) (Baker's yeast).